The chain runs to 437 residues: Enolase 2 (437 aa).

(2R)-2-phosphoglycerate is bound at residue Gln162. Glu204 serves as the catalytic Proton donor. Mg(2+) is bound by residues Asp251, Glu297, and Asp324. Lys349, Arg378, Ser379, and Lys400 together coordinate (2R)-2-phosphoglycerate. Catalysis depends on Lys349, which acts as the Proton acceptor.

It belongs to the enolase family. Mg(2+) is required as a cofactor.

The protein resides in the cytoplasm. It localises to the secreted. The protein localises to the cell surface. It carries out the reaction (2R)-2-phosphoglycerate = phosphoenolpyruvate + H2O. It functions in the pathway carbohydrate degradation; glycolysis; pyruvate from D-glyceraldehyde 3-phosphate: step 4/5. In terms of biological role, catalyzes the reversible conversion of 2-phosphoglycerate (2-PG) into phosphoenolpyruvate (PEP). It is essential for the degradation of carbohydrates via glycolysis. This Chlorobaculum tepidum (strain ATCC 49652 / DSM 12025 / NBRC 103806 / TLS) (Chlorobium tepidum) protein is Enolase 2.